The primary structure comprises 184 residues: MSSARRCLFGRPTPEQRSRTRIWLEDAVKRMRQEESQKWGFDFELETPLPSSAGFVYEVIPENCVPEFYRTKVLTVRTTCSSLDISSTTLTPLSSPSTSDKEEPSLMDPNSSFEDEEEPKKWQFREPPTPRKTPTKRQQKMTDFMAVSRKKNSLSPNKLSPVNVIFTPKSRRPTIRTRSSCSPY.

A compositionally biased stretch (low complexity) spans 85–98 (ISSTTLTPLSSPST). The tract at residues 85–184 (ISSTTLTPLS…IRTRSSCSPY (100 aa)) is disordered.

It belongs to the CDI family. Interacts with cyd-1; the interaction is direct. In embryos, expression is first seen in pharyngeal primordium and later in all differentiating cells. Post embryonic expression corresponds to developmental patterns of cell cycle progression in many tissues including sex myoblasts, distal tip cells, vulval cells, seam cells, neurons, intestine cells and hypodermal cells.

Its subcellular location is the nucleus. Functionally, negative cell-cycle regulator that functions at the G1-to-S-phase transition. Required for suspension of the cell cycle in dauer larvae and starved L1 larvae. In vulval precursor cells (VPCs), a pathway of heterochronic genes acts via cki-1 to maintain VPCs in G1 during the L2 larval stage. Cul-2 may function in ubiquitin-mediated degradation by targeting cki-1 for degradation. Involved in distal tip cell development by repressing and modulating cye-1/cdk-2 activity levels in Z1.aa/Z4.pp and in Z1.ap/Z4.pa. In Caenorhabditis elegans, this protein is Cyclin-dependent kinase inhibitor 1.